Consider the following 119-residue polypeptide: Toxin ICK-8 (119 aa).

The signal sequence occupies residues 1 to 19 (MMKLYSLVIIATLAAAAFA). 4 disulfide bridges follow: cysteine 59–cysteine 74, cysteine 67–cysteine 80, cysteine 71–cysteine 116, and cysteine 73–cysteine 87.

Belongs to the neurotoxin 25 family. ICK-8 subfamily. Expressed by the venom gland.

The protein resides in the secreted. Functionally, ion channel inhibitor. The chain is Toxin ICK-8 from Trittame loki (Brush-footed trapdoor spider).